A 624-amino-acid polypeptide reads, in one-letter code: LRR receptor kinase BAK1 (624 aa).

Residues 1-25 form the signal peptide; it reads MAAPRWAVWAVLLLRLLVPAARVLA. Topologically, residues 26–237 are extracellular; it reads NMEGDALHSL…QSPGSSSSTG (212 aa). 4 LRR repeats span residues 91 to 115, 117 to 139, 140 to 163, and 164 to 188; these read LKNL…LGNL, NLVS…LGNL, LKLR…LTAI, and TALQ…SFSL. N-linked (GlcNAc...) asparagine glycosylation is found at Asn-103, Asn-114, Asn-127, Asn-149, and Asn-175. The tract at residues 205–236 is disordered; it reads TTKPCPGAPPFSPPPPYNPPTPVQSPGSSSST. Positions 210–227 are enriched in pro residues; the sequence is PGAPPFSPPPPYNPPTPV. The helical transmembrane segment at 238–258 threads the bilayer; that stretch reads AIAGGVAAGAALLFAIPAIGF. Topologically, residues 259-624 are cytoplasmic; it reads AWYRRRKPQE…LHAVELSGPR (366 aa). Residues 301–588 enclose the Protein kinase domain; sequence FSNKNILGRG…GLAERWEEWQ (288 aa). ATP is bound by residues 307–315 and Lys-329; that span reads LGRGGFGKV. Catalysis depends on Asp-428, which acts as the Proton acceptor.

It belongs to the protein kinase superfamily. Ser/Thr protein kinase family. As to quaternary structure, forms homodimers. Interacts with BRI1. Interacts with REM4.1.

It is found in the cell membrane. The enzyme catalyses L-seryl-[protein] + ATP = O-phospho-L-seryl-[protein] + ADP + H(+). It carries out the reaction L-threonyl-[protein] + ATP = O-phospho-L-threonyl-[protein] + ADP + H(+). In terms of biological role, LRR receptor kinase involved in defense response. Does not seem to be required specifically for XA21-mediated immunity or basal resistance to Xanthomonas oryzae pv. oryzae (Xoo), or immunity to Magnaporthe oryzae. Involved in brassinosteroid (BR) signaling pathway. Acts as a coreceptor of BRI1. Forms at the plasma membrane a receptor complex with BRI1 which is activated in response to brassinolide. Phosphorylates BRI1. Required for normal plant growth and leaf development. Possesses kinase activity in vitro. In Oryza sativa subsp. indica (Rice), this protein is LRR receptor kinase BAK1.